A 203-amino-acid polypeptide reads, in one-letter code: Adenylyl-sulfate kinase (203 aa).

An ATP-binding site is contributed by 35–42; that stretch reads GLSGSGKS. The active-site Phosphoserine intermediate is the serine 109.

This sequence belongs to the APS kinase family.

It catalyses the reaction adenosine 5'-phosphosulfate + ATP = 3'-phosphoadenylyl sulfate + ADP + H(+). It participates in sulfur metabolism; hydrogen sulfide biosynthesis; sulfite from sulfate: step 2/3. Functionally, catalyzes the synthesis of activated sulfate. The sequence is that of Adenylyl-sulfate kinase from Geotalea daltonii (strain DSM 22248 / JCM 15807 / FRC-32) (Geobacter daltonii).